Consider the following 280-residue polypeptide: Dexamethasone-induced Ras-related protein 1 (280 aa).

An S-nitrosocysteine modification is found at cysteine 11. GTP is bound at residue 31-38 (GSSKVGKT). Positions 53–61 (YTPTIEDFH) match the Effector region motif. Residues 78 to 82 (DTSGN) and 145 to 148 (NKGD) contribute to the GTP site. Cysteine 277 is modified (cysteine methyl ester). A lipid anchor (S-farnesyl cysteine) is attached at cysteine 277. A propeptide spans 278-280 (VIS) (removed in mature form).

It belongs to the small GTPase superfamily. RasD family. As to quaternary structure, forms a ternary complex with CAPON and NOS1. Component of a complex, at least composed of APBB1, RASD1/DEXRAS1 and APP. Interacts with APBB1/FE65. Forms. In terms of processing, S-nitrosylation stimulates guanine-nucleotide exchange activity. As to expression, prominently found in brain at both mRNA and protein levels. Moderate expression in testis and lung. Slightly expressed in heart, spleen, skeletal muscle, liver and kidney.

The protein localises to the cell membrane. It localises to the cytoplasm. Its subcellular location is the perinuclear region. The protein resides in the nucleus. In terms of biological role, small GTPase. Negatively regulates the transcription regulation activity of the APBB1/FE65-APP complex via its interaction with APBB1/FE65. The chain is Dexamethasone-induced Ras-related protein 1 (Rasd1) from Rattus norvegicus (Rat).